The chain runs to 244 residues: 5-oxoprolinase subunit A (244 aa).

Belongs to the LamB/PxpA family. Forms a complex composed of PxpA, PxpB and PxpC.

It carries out the reaction 5-oxo-L-proline + ATP + 2 H2O = L-glutamate + ADP + phosphate + H(+). Catalyzes the cleavage of 5-oxoproline to form L-glutamate coupled to the hydrolysis of ATP to ADP and inorganic phosphate. The sequence is that of 5-oxoprolinase subunit A from Escherichia coli (strain SMS-3-5 / SECEC).